The sequence spans 71 residues: Protein SlyX homolog (71 aa).

The disordered stretch occupies residues 52–71 (RLDQAESSAGAPANERPPHY).

This sequence belongs to the SlyX family.

This is Protein SlyX homolog from Rhodopseudomonas palustris (strain ATCC BAA-98 / CGA009).